A 734-amino-acid polypeptide reads, in one-letter code: Putative protocadherin beta-18 (734 aa).

Cadherin domains lie at methionine 1 to phenylalanine 79, leucine 80 to phenylalanine 188, glutamate 189 to isoleucine 293, alanine 294 to phenylalanine 398, and threonine 399 to valine 508. Residue asparagine 115 is glycosylated (N-linked (GlcNAc...) asparagine). N-linked (GlcNAc...) asparagine glycans are attached at residues asparagine 365 and asparagine 383. A glycan (N-linked (GlcNAc...) asparagine) is linked at asparagine 514. The Cadherin 6 domain occupies glycine 515–threonine 621. The helical transmembrane segment at valine 638–valine 658 threads the bilayer.

It is found in the cell membrane. In terms of biological role, potential calcium-dependent cell-adhesion protein. The sequence is that of Putative protocadherin beta-18 (PCDHB18P) from Homo sapiens (Human).